A 424-amino-acid polypeptide reads, in one-letter code: Light-independent protochlorophyllide reductase subunit N (424 aa).

3 residues coordinate [4Fe-4S] cluster: cysteine 26, cysteine 51, and cysteine 112.

It belongs to the BchN/ChlN family. Protochlorophyllide reductase is composed of three subunits; BchL, BchN and BchB. Forms a heterotetramer of two BchB and two BchN subunits. Requires [4Fe-4S] cluster as cofactor.

The enzyme catalyses chlorophyllide a + oxidized 2[4Fe-4S]-[ferredoxin] + 2 ADP + 2 phosphate = protochlorophyllide a + reduced 2[4Fe-4S]-[ferredoxin] + 2 ATP + 2 H2O. It participates in porphyrin-containing compound metabolism; bacteriochlorophyll biosynthesis (light-independent). Component of the dark-operative protochlorophyllide reductase (DPOR) that uses Mg-ATP and reduced ferredoxin to reduce ring D of protochlorophyllide (Pchlide) to form chlorophyllide a (Chlide). This reaction is light-independent. The NB-protein (BchN-BchB) is the catalytic component of the complex. In Rhodobacter capsulatus (strain ATCC BAA-309 / NBRC 16581 / SB1003), this protein is Light-independent protochlorophyllide reductase subunit N.